A 1140-amino-acid polypeptide reads, in one-letter code: Protein FAM184A (1140 aa).

Coiled coils occupy residues 57-256 (ALNT…NKAQ), 296-800 (AILR…IEME), and 868-907 (RITD…LEFK). The disordered stretch occupies residues 1063–1128 (PNLSALESGG…EASPVASPDP (66 aa)).

The protein belongs to the FAM184 family.

It localises to the cytoplasm. It is found in the P-body. Its subcellular location is the cytoskeleton. The protein resides in the microtubule organizing center. The protein localises to the centrosome. It localises to the centriolar satellite. In Homo sapiens (Human), this protein is Protein FAM184A.